The following is a 310-amino-acid chain: MKTLTRNISRTAITVALVILAFIAISRAWVFYTESPWTRDARFSADIVAIAPDVAGLITAVNVRDNQLVKKDQVLFTIDQPRYQKALEESEADVAYYQALTTEKRREAGRRNKLGIQAMSREEIDQSNNLLQTVLHQLAKAEATRDLAKLDLERTVIRAPSDGWVTNLNVYTGEFITRGSTAVALVKQHSFYVLAYMEETKLEGVRPGYRAEITPLGSNRVLKGTVDSIAAGVTNSSATRDSKGMATVDSNLEWVRLAQRVPVRIRLDDEQGNLWPAGTTATVVITGEKDRNASNDSLFRKIAHRLREFG.

A helical transmembrane segment spans residues 12-32; it reads AITVALVILAFIAISRAWVFY.

It belongs to the membrane fusion protein (MFP) (TC 8.A.1) family.

The protein localises to the cell inner membrane. Its function is as follows. Forms an efflux pump with AaeB. This Enterobacter sp. (strain 638) protein is p-hydroxybenzoic acid efflux pump subunit AaeA.